A 1374-amino-acid chain; its full sequence is Alpha,alpha-trehalose-phosphate synthase [UDP-forming] 1 (1374 aa).

Disordered stretches follow at residues 28 to 66 (DTGK…SDKD), 86 to 117 (YTPG…DDEG), and 1352 to 1374 (KADS…SKQQ). Basic and acidic residues-rich tracts occupy residues 56–66 (DPFDRPKSDKD) and 86–95 (YTPGKEKGVD). Acidic residues-rich tracts occupy residues 96–109 (QDES…EDHD) and 1356–1368 (YYDD…DQED).

The protein in the N-terminal section; belongs to the glycosyltransferase 20 family. This sequence in the C-terminal section; belongs to the gob-1 trehalose phosphatase family.

The catalysed reaction is D-glucose 6-phosphate + UDP-alpha-D-glucose = alpha,alpha-trehalose 6-phosphate + UDP + H(+). Its function is as follows. Catalyzes the production of trehalose from glucose-6-phosphate and UDP-alpha-D-glucose in a 2 step process. The sequence is that of Alpha,alpha-trehalose-phosphate synthase [UDP-forming] 1 (tps-1) from Caenorhabditis briggsae.